The sequence spans 159 residues: Phosphopantetheine adenylyltransferase (159 aa).

Thr9 contacts substrate. Residues 9-10 and His17 each bind ATP; that span reads TF. Residues Lys41, Leu73, and Arg87 each coordinate substrate. Residues 88 to 90, Glu98, and 123 to 129 contribute to the ATP site; these read GLR and YSFISST.

It belongs to the bacterial CoaD family. In terms of assembly, homohexamer. It depends on Mg(2+) as a cofactor.

The protein resides in the cytoplasm. It catalyses the reaction (R)-4'-phosphopantetheine + ATP + H(+) = 3'-dephospho-CoA + diphosphate. It functions in the pathway cofactor biosynthesis; coenzyme A biosynthesis; CoA from (R)-pantothenate: step 4/5. Functionally, reversibly transfers an adenylyl group from ATP to 4'-phosphopantetheine, yielding dephospho-CoA (dPCoA) and pyrophosphate. The polypeptide is Phosphopantetheine adenylyltransferase (Pseudomonas aeruginosa (strain LESB58)).